Consider the following 77-residue polypeptide: RNA-binding protein Hfq (77 aa).

The region spanning 10–70 (DAFLNHVRKT…ISTVMPAQPI (61 aa)) is the Sm domain.

It belongs to the Hfq family. In terms of assembly, homohexamer.

Its function is as follows. RNA chaperone that binds small regulatory RNA (sRNAs) and mRNAs to facilitate mRNA translational regulation in response to envelope stress, environmental stress and changes in metabolite concentrations. Also binds with high specificity to tRNAs. The polypeptide is RNA-binding protein Hfq (Jannaschia sp. (strain CCS1)).